A 391-amino-acid polypeptide reads, in one-letter code: Adaptive-response sensory kinase SasA (391 aa).

The Histidine kinase domain maps to 169–391 (MLAHDLRSPL…CFHFTLPVCR (223 aa)). Histidine 172 bears the Phosphohistidine; by autocatalysis mark.

Homooligomerizes. Interacts with KaiC. Participates in the KaiABC clock complex, whose core is composed of a KaiC homohexamer, 6 KaiB and up to 6 KaiA dimers. SasA and KaiB(fs) compete to bind to KaiC.

The enzyme catalyses ATP + protein L-histidine = ADP + protein N-phospho-L-histidine.. Its function is as follows. Member of the two-component regulatory system SasA/RpaA involved in genome-wide circadian gene expression. One of several clock output pathways. Participates in the Kai clock protein complex, the main circadian regulator in cyanobacteria, via its interaction with KaiC. KaiC enhances the autophosphorylation activity of SasA, which then transfers its phosphate group to RpaA to activate it. In addition to its output function, recruits fold-shifted KaiB (KaiB(fs)) to KaiC to cooperatively form the KaiB(6):KaiC(6) complex (independent of SasA kinase activity). Required for robustness of the circadian rhythm of gene expression and is involved in clock output, also required for adaptation to light/dark cycles. The protein is Adaptive-response sensory kinase SasA of Rippkaea orientalis (strain PCC 8801 / RF-1) (Cyanothece sp. (strain PCC 8801)).